A 385-amino-acid polypeptide reads, in one-letter code: Succinyl-diaminopimelate desuccinylase (385 aa).

H73 is a binding site for Zn(2+). D75 is a catalytic residue. Residue D106 participates in Zn(2+) binding. The Proton acceptor role is filled by E141. Zn(2+) is bound by residues E142, E170, and H359.

This sequence belongs to the peptidase M20A family. DapE subfamily. In terms of assembly, homodimer. Zn(2+) is required as a cofactor. Requires Co(2+) as cofactor.

The enzyme catalyses N-succinyl-(2S,6S)-2,6-diaminopimelate + H2O = (2S,6S)-2,6-diaminopimelate + succinate. It participates in amino-acid biosynthesis; L-lysine biosynthesis via DAP pathway; LL-2,6-diaminopimelate from (S)-tetrahydrodipicolinate (succinylase route): step 3/3. Catalyzes the hydrolysis of N-succinyl-L,L-diaminopimelic acid (SDAP), forming succinate and LL-2,6-diaminopimelate (DAP), an intermediate involved in the bacterial biosynthesis of lysine and meso-diaminopimelic acid, an essential component of bacterial cell walls. The chain is Succinyl-diaminopimelate desuccinylase from Methylorubrum extorquens (strain CM4 / NCIMB 13688) (Methylobacterium extorquens).